Consider the following 973-residue polypeptide: Vacuolar membrane protease (973 aa).

Residues 1-15 (MARQYSRTNPLGFTP) are Cytoplasmic-facing. The chain crosses the membrane as a helical span at residues 16-36 (WPVTIITALVYLALVIPLLVV). Over 37 to 383 (QHVVPSAPGS…STLAVFELHT (347 aa)) the chain is Vacuolar. Asn-52 and Asn-115 each carry an N-linked (GlcNAc...) asparagine glycan. 2 residues coordinate Zn(2+): His-167 and Asp-179. The Proton acceptor role is filled by Glu-213. Residues Glu-214, Glu-239, and His-312 each contribute to the Zn(2+) site. The helical transmembrane segment at 384–404 (LFALSVTLLIVAPLVLLATSI) threads the bilayer. Over 405–438 (ALVRADRMYLFRSTARVPGSDDFDEGVSLQGVRG) the chain is Cytoplasmic. A helical transmembrane segment spans residues 439–459 (FFRFPFLLVIPTGVAVGLAYL). At 460–469 (VTKINPYIIH) the chain is on the vacuolar side. The chain crosses the membrane as a helical span at residues 470–490 (SSEYAVWSMMISAWVFLAWFV). The Cytoplasmic segment spans residues 491 to 504 (SRVADFARPSAFHR). Residues 505 to 525 (VYVLTWMFVAEWVLLVIATVY) traverse the membrane as a helical segment. The Vacuolar portion of the chain corresponds to 526–529 (ENRY). Residues 530 to 550 (GLAGGYFVFFALSGTFLATWI) form a helical membrane-spanning segment. Topologically, residues 551 to 674 (SYLELFALPR…GLPKWTWVLQ (124 aa)) are cytoplasmic. Positions 572 to 623 (SRYASNHGSRLGTSSGEHGMDDAEDEEDDDGDDEDEARNVEEEPTESTSLLR) are disordered. Over residues 574 to 587 (YASNHGSRLGTSSG) the composition is skewed to polar residues. Residues 593 to 607 (DAEDEEDDDGDDEDE) are compositionally biased toward acidic residues. Residues 675–695 (FLLSAPIVLILVGPLALLLTA) form a helical membrane-spanning segment. The Vacuolar portion of the chain corresponds to 696–708 (ALRQTAQDGSSPL). Residues 709 to 729 (FVYIAIAVLTTLLVTPLLPFI) form a helical membrane-spanning segment. The Cytoplasmic segment spans residues 730–735 (HRYTHH). Residues 736–756 (IPLFLLLVFTGTLIYNLVAFP) form a helical membrane-spanning segment. Residues 757 to 973 (FSPSNRLKLF…LVEGSRRFEV (217 aa)) lie on the Vacuolar side of the membrane. N-linked (GlcNAc...) asparagine glycans are attached at residues Asn-803 and Asn-839.

It belongs to the peptidase M28 family. Zn(2+) serves as cofactor.

The protein localises to the vacuole membrane. In terms of biological role, may be involved in vacuolar sorting and osmoregulation. The protein is Vacuolar membrane protease of Aspergillus clavatus (strain ATCC 1007 / CBS 513.65 / DSM 816 / NCTC 3887 / NRRL 1 / QM 1276 / 107).